Consider the following 411-residue polypeptide: Arginine deiminase 1 (411 aa).

C401 serves as the catalytic Amidino-cysteine intermediate.

This sequence belongs to the arginine deiminase family.

The protein localises to the cytoplasm. It catalyses the reaction L-arginine + H2O = L-citrulline + NH4(+). Its pathway is amino-acid degradation; L-arginine degradation via ADI pathway; carbamoyl phosphate from L-arginine: step 1/2. The chain is Arginine deiminase 1 (arcA1) from Staphylococcus epidermidis (strain ATCC 12228 / FDA PCI 1200).